A 457-amino-acid polypeptide reads, in one-letter code: Argininosuccinate lyase (457 aa).

The protein belongs to the lyase 1 family. Argininosuccinate lyase subfamily.

It is found in the cytoplasm. The catalysed reaction is 2-(N(omega)-L-arginino)succinate = fumarate + L-arginine. It functions in the pathway amino-acid biosynthesis; L-arginine biosynthesis; L-arginine from L-ornithine and carbamoyl phosphate: step 3/3. This is Argininosuccinate lyase from Sodalis glossinidius (strain morsitans).